Here is a 275-residue protein sequence, read N- to C-terminus: Phosphatidylglycerol--prolipoprotein diacylglyceryl transferase (275 aa).

The next 4 membrane-spanning stretches (helical) occupy residues 20 to 40 (FTIHWYGVIIASGVVLALLLA), 58 to 78 (LLWALPIAIICARIYYVVFQW), 88 to 108 (IIAIWDGGIAIYGAILGGFIV), and 118 to 138 (LSSWLMMDIIAPTLIMAQGIG). Arginine 139 lines the a 1,2-diacyl-sn-glycero-3-phospho-(1'-sn-glycerol) pocket. 2 helical membrane passes run 209–229 (GEIFLTYVMWYAFGRFFIEGM) and 239–259 (IRISQLLSIVFFVSALIILII).

The protein belongs to the Lgt family.

The protein resides in the cell membrane. It catalyses the reaction L-cysteinyl-[prolipoprotein] + a 1,2-diacyl-sn-glycero-3-phospho-(1'-sn-glycerol) = an S-1,2-diacyl-sn-glyceryl-L-cysteinyl-[prolipoprotein] + sn-glycerol 1-phosphate + H(+). The protein operates within protein modification; lipoprotein biosynthesis (diacylglyceryl transfer). Catalyzes the transfer of the diacylglyceryl group from phosphatidylglycerol to the sulfhydryl group of the N-terminal cysteine of a prolipoprotein, the first step in the formation of mature lipoproteins. The chain is Phosphatidylglycerol--prolipoprotein diacylglyceryl transferase from Limosilactobacillus reuteri (strain DSM 20016) (Lactobacillus reuteri).